The sequence spans 446 residues: Sterile alpha motif domain-containing protein 7 (446 aa).

The tract at residues 94–168 (HTARTEMEMY…NLQGNPMLAA (75 aa)) is required for localization to nuclear polycomb bodies. Disordered regions lie at residues 187 to 207 (NTGNQKALDSDAESSKSQAEE) and 225 to 277 (KDPD…AWDD). Positions 232-249 (PSNQKSSETNEKPTTALA) are enriched in polar residues. In terms of domain architecture, SAM spans 327-392 (WTVDDVHSFI…SQVSQHVGSM (66 aa)).

Monomer, homodimer and homooligomer. Component of a Polycomb group (PcG) multiprotein PRC1-like complex. Interacts with PHC2, NR2E3 and SAMD11. Interacts with RNF1 in a PHC2-dependent manner. Expressed in the retina (at protein level). Expressed in the retinal inner and outer nuclear layers.

The protein localises to the nucleus. It localises to the cytoplasm. In terms of biological role, component of a Polycomb group (PcG) multiprotein PRC1-like complex, essential for establishing rod photoreceptor cell identity and function by silencing nonrod gene expression in developing rod photoreceptor cells. Via its association with the PRC1-like complex, promotes epigenetic repressive marks H3K27me3 and H2AK119ub marks in nonrod genes, silencing their transcription. Represses Crx-controlled photoreceptor-specific gene expression. The chain is Sterile alpha motif domain-containing protein 7 (SAMD7) from Homo sapiens (Human).